We begin with the raw amino-acid sequence, 340 residues long: Ketol-acid reductoisomerase (NADP(+)) (340 aa).

The 183-residue stretch at 1-183 (MAITVYYDKD…GGGRTGIIET (183 aa)) folds into the KARI N-terminal Rossmann domain. NADP(+) is bound by residues 26–29 (FGSQ), S54, and 84–87 (DEFQ). The active site involves H109. Residue G135 coordinates NADP(+). In terms of domain architecture, KARI C-terminal knotted spans 184–329 (TFKAETETDL…EKLRGMMPWI (146 aa)). Mg(2+) contacts are provided by D192, E196, E228, and E232. S253 contributes to the substrate binding site.

It belongs to the ketol-acid reductoisomerase family. The cofactor is Mg(2+).

The catalysed reaction is (2R)-2,3-dihydroxy-3-methylbutanoate + NADP(+) = (2S)-2-acetolactate + NADPH + H(+). It carries out the reaction (2R,3R)-2,3-dihydroxy-3-methylpentanoate + NADP(+) = (S)-2-ethyl-2-hydroxy-3-oxobutanoate + NADPH + H(+). The protein operates within amino-acid biosynthesis; L-isoleucine biosynthesis; L-isoleucine from 2-oxobutanoate: step 2/4. It participates in amino-acid biosynthesis; L-valine biosynthesis; L-valine from pyruvate: step 2/4. Involved in the biosynthesis of branched-chain amino acids (BCAA). Catalyzes an alkyl-migration followed by a ketol-acid reduction of (S)-2-acetolactate (S2AL) to yield (R)-2,3-dihydroxy-isovalerate. In the isomerase reaction, S2AL is rearranged via a Mg-dependent methyl migration to produce 3-hydroxy-3-methyl-2-ketobutyrate (HMKB). In the reductase reaction, this 2-ketoacid undergoes a metal-dependent reduction by NADPH to yield (R)-2,3-dihydroxy-isovalerate. This Campylobacter fetus subsp. fetus (strain 82-40) protein is Ketol-acid reductoisomerase (NADP(+)).